We begin with the raw amino-acid sequence, 86 residues long: Mitochondrial import inner membrane translocase subunit Tim10 (86 aa).

A Twin CX3C motif motif is present at residues 29–54 (CQAKCIATAFRESELTKGEAVCLDRC). 2 cysteine pairs are disulfide-bonded: Cys29–Cys54 and Cys33–Cys50.

It belongs to the small Tim family. Heterohexamer; composed of 3 copies of tim-9/tin-9.1 and 3 copies of tim-10/tin-10, named soluble 70 kDa complex. The complex associates with the tim-22 component of the TIM22 complex. Interacts with multi-pass transmembrane proteins in transit.

The protein localises to the mitochondrion inner membrane. Functionally, mitochondrial intermembrane chaperone that participates in the import and insertion of multi-pass transmembrane proteins into the mitochondrial inner membrane. May also be required for the transfer of beta-barrel precursors from the TOM complex to the sorting and assembly machinery (SAM complex) of the outer membrane. Acts as a chaperone-like protein that protects the hydrophobic precursors from aggregation and guide them through the mitochondrial intermembrane space. This Caenorhabditis elegans protein is Mitochondrial import inner membrane translocase subunit Tim10 (tin-10).